The following is a 199-amino-acid chain: Ribonuclease HII (199 aa).

In terms of domain architecture, RNase H type-2 spans 7–196; that stretch reads PWVCGVDEAG…VRELMANEKD (190 aa). A divalent metal cation-binding residues include Asp13, Glu14, and Asp105.

It belongs to the RNase HII family. Requires Mn(2+) as cofactor. Mg(2+) serves as cofactor.

It localises to the cytoplasm. The enzyme catalyses Endonucleolytic cleavage to 5'-phosphomonoester.. Functionally, endonuclease that specifically degrades the RNA of RNA-DNA hybrids. The chain is Ribonuclease HII from Nitrosospira multiformis (strain ATCC 25196 / NCIMB 11849 / C 71).